The following is a 352-amino-acid chain: Putative [LysW]-L-2-aminoadipate 6-phosphate reductase (352 aa).

An NADP(+)-binding site is contributed by 11 to 14; sequence SGYT. Cysteine 148 is an active-site residue. Asparagine 319 serves as a coordination point for NADP(+).

Belongs to the NAGSA dehydrogenase family. Type 1 subfamily. LysY sub-subfamily.

The protein resides in the cytoplasm. The enzyme catalyses [amino-group carrier protein]-C-terminal-N-(1-carboxy-5-oxopentan-1-yl)-L-glutamine + phosphate + NADP(+) = [amino-group carrier protein]-C-terminal-N-(1-carboxy-5-phosphooxy-5-oxopentan-1-yl)-L-glutamine + NADPH + H(+). Its pathway is amino-acid biosynthesis; L-lysine biosynthesis via AAA pathway; L-lysine from L-alpha-aminoadipate (Thermus route): step 3/5. Its function is as follows. Catalyzes the NADPH-dependent reduction of [LysW]-aminoadipate 6-phosphate to yield [LysW]-aminoadipate 6-semialdehyde. The protein is Putative [LysW]-L-2-aminoadipate 6-phosphate reductase of Thermomicrobium roseum (strain ATCC 27502 / DSM 5159 / P-2).